Consider the following 85-residue polypeptide: Large ribosomal subunit protein bL27 (85 aa).

A disordered region spans residues 1–22; it reads MAHKKAGGSSRNGRDSHSKRLG.

The protein belongs to the bacterial ribosomal protein bL27 family.

The chain is Large ribosomal subunit protein bL27 from Nitrosomonas europaea (strain ATCC 19718 / CIP 103999 / KCTC 2705 / NBRC 14298).